Here is a 272-residue protein sequence, read N- to C-terminus: Cell division protein DivIB (272 aa).

Topologically, residues 1–21 are cytoplasmic; that stretch reads MRLSSHGKKTVSTSNNPVFNR. The chain crosses the membrane as a helical span at residues 22–42; it reads IGLFFTAAILFALFLQMLFFL. Residues 43–115 form the POTRA domain; that stretch reads RPWQDIKETK…GTAIIRVNEN (73 aa). Over 43–272 the chain is Extracellular; that stretch reads RPWQDIKETK…SSSKSSNSSK (230 aa). Residues 253–272 are disordered; it reads LSSLSSDKSKSSSKSSNSSK.

This sequence belongs to the FtsQ/DivIB family. DivIB subfamily.

It is found in the cell membrane. Cell division protein that may be involved in stabilizing or promoting the assembly of the division complex. The polypeptide is Cell division protein DivIB (Oenococcus oeni (strain ATCC BAA-331 / PSU-1)).